The primary structure comprises 321 residues: Putative membrane-bound redox modulator Alx (321 aa).

The Periplasmic segment spans residues 1–6 (MNTVGT). Residues 7 to 27 (PLLWGGFAVVVAIMLAIDLLL) form a helical membrane-spanning segment. Residues 28–43 (QGRRGAHAMTMKQAAA) are Cytoplasmic-facing. The chain crosses the membrane as a helical span at residues 44–64 (WSLVWVTLSLLFNAAFWWYLV). The Periplasmic segment spans residues 65-89 (QTEGRAVADPQALAFLTGYLIEKSL). The chain crosses the membrane as a helical span at residues 90 to 110 (AVDNVFVWLMLFSYFSVPAAL). Residues 111–113 (QRR) are Cytoplasmic-facing. The chain crosses the membrane as a helical span at residues 114–134 (VLVYGVLGAIVLRTIMIFTGS). Position 135 (tryptophan 135) is a topological domain, periplasmic. The helical transmembrane segment at 136-156 (LISQFDWILYIFGAFLLFTGV) threads the bilayer. Residues 157–198 (KMALAHEDESGIGDKPLVRWLRGHLRMTDTIDNEHFFVRKNG) lie on the Cytoplasmic side of the membrane. The chain crosses the membrane as a helical span at residues 199–219 (LLYATPLMLVLILVELSDVIF). Residues 220–225 (AVDSIP) lie on the Periplasmic side of the membrane. Residues 226 to 246 (AIFAVTTDPFIVLTSNLFAIL) traverse the membrane as a helical segment. Over 247-261 (GLRAMYFLLAGVAER) the chain is Cytoplasmic. The helical transmembrane segment at 262–282 (FSMLKYGLAVILVFIGIKMLI) threads the bilayer. Residues 283–286 (VDFY) are Periplasmic-facing. Residues 287-307 (HIPIAVSLGVVFGILVMTFII) traverse the membrane as a helical segment. The Cytoplasmic portion of the chain corresponds to 308 to 321 (NAWVNYRHDKQRVG).

It belongs to the TerC family.

It localises to the cell inner membrane. Has been proposed to be a redox modulator. In Escherichia coli O157:H7, this protein is Putative membrane-bound redox modulator Alx (alx).